We begin with the raw amino-acid sequence, 250 residues long: NADH-quinone oxidoreductase subunit C (250 aa).

This sequence belongs to the complex I 30 kDa subunit family. As to quaternary structure, NDH-1 is composed of 14 different subunits. Subunits NuoB, C, D, E, F, and G constitute the peripheral sector of the complex.

It localises to the cell inner membrane. The enzyme catalyses a quinone + NADH + 5 H(+)(in) = a quinol + NAD(+) + 4 H(+)(out). In terms of biological role, NDH-1 shuttles electrons from NADH, via FMN and iron-sulfur (Fe-S) centers, to quinones in the respiratory chain. The immediate electron acceptor for the enzyme in this species is believed to be ubiquinone. Couples the redox reaction to proton translocation (for every two electrons transferred, four hydrogen ions are translocated across the cytoplasmic membrane), and thus conserves the redox energy in a proton gradient. The polypeptide is NADH-quinone oxidoreductase subunit C (Xanthomonas oryzae pv. oryzae (strain PXO99A)).